Here is a 1012-residue protein sequence, read N- to C-terminus: Formate dehydrogenase subunit alpha (1012 aa).

A signal peptide (tat-type signal) is located at residues 1–35 (MLIKRRAFLKLTAAGATLSAFGGLGVDLAPAKAQA). The region spanning 45–103 (AKQTTSVCCYCSVGCGLIVHTDKKTNRAINVEGDPDHPINEGSLCAKGASTWQLAENER) is the 4Fe-4S Mo/W bis-MGD-type domain. [4Fe-4S] cluster is bound by residues C52, C55, C59, and C89. A W-bis(molybdopterin guanine dinucleotide)-binding site is contributed by U193. Residue U193 is a non-standard amino acid, selenocysteine. Ca(2+)-binding residues include T393, K395, K398, L428, and N430. Residues C852 and C879 are joined by a disulfide bond.

Belongs to the prokaryotic molybdopterin-containing oxidoreductase family. As to quaternary structure, heterodimer of alpha (FdhA) and beta (FdhB) subunits. It depends on [4Fe-4S] cluster as a cofactor. W-bis(molybdopterin guanine dinucleotide) serves as cofactor. In terms of processing, the disulfide bond is likely to be broken in the active form of this enzyme. Predicted to be exported by the Tat system. The position of the signal peptide cleavage has been experimentally proven.

The protein localises to the periplasm. It carries out the reaction formate + NAD(+) = CO2 + NADH. Alpha chain of the formate dehydrogenase (FDH) catalyze the reversible two-electron oxidation of formate to carbon dioxide. FDH loses activity in the presence of air, but this activity can be restored. The alpha subunit of formate dehydrogenase forms the active site. The chain is Formate dehydrogenase subunit alpha from Megalodesulfovibrio gigas (Desulfovibrio gigas).